Consider the following 493-residue polypeptide: 3-octaprenyl-4-hydroxybenzoate carboxy-lyase (493 aa).

Asn172 provides a ligand contact to Mn(2+). Prenylated FMN is bound by residues 175 to 177 (IYR), 189 to 191 (RWL), and 194 to 195 (RG). Glu238 lines the Mn(2+) pocket. The active-site Proton donor is the Asp287.

This sequence belongs to the UbiD family. As to quaternary structure, homohexamer. Prenylated FMN serves as cofactor. It depends on Mn(2+) as a cofactor.

The protein resides in the cell membrane. It catalyses the reaction a 4-hydroxy-3-(all-trans-polyprenyl)benzoate + H(+) = a 2-(all-trans-polyprenyl)phenol + CO2. The protein operates within cofactor biosynthesis; ubiquinone biosynthesis. Catalyzes the decarboxylation of 3-octaprenyl-4-hydroxy benzoate to 2-octaprenylphenol, an intermediate step in ubiquinone biosynthesis. The chain is 3-octaprenyl-4-hydroxybenzoate carboxy-lyase from Shewanella putrefaciens (strain CN-32 / ATCC BAA-453).